A 737-amino-acid chain; its full sequence is 1,4-alpha-glucan branching enzyme GlgB (737 aa).

Asp419 acts as the Nucleophile in catalysis. Residue Glu472 is the Proton donor of the active site.

This sequence belongs to the glycosyl hydrolase 13 family. GlgB subfamily. Monomer.

The enzyme catalyses Transfers a segment of a (1-&gt;4)-alpha-D-glucan chain to a primary hydroxy group in a similar glucan chain.. Its pathway is glycan biosynthesis; glycogen biosynthesis. Catalyzes the formation of the alpha-1,6-glucosidic linkages in glycogen by scission of a 1,4-alpha-linked oligosaccharide from growing alpha-1,4-glucan chains and the subsequent attachment of the oligosaccharide to the alpha-1,6 position. The sequence is that of 1,4-alpha-glucan branching enzyme GlgB from Cellvibrio japonicus (strain Ueda107) (Pseudomonas fluorescens subsp. cellulosa).